A 182-amino-acid chain; its full sequence is Late embryogenesis abundant protein 3 (182 aa).

The segment at 1 to 51 (MAQHQHSPQRPRDQDNTRPHDQYGIVFSVSGDDVARKQGDSFSQPDPTVAT) is disordered. A Nuclear localization signal (NLS) motif is present at residues 7-11 (SPQRP). A compositionally biased stretch (basic and acidic residues) spans 10–21 (RPRDQDNTRPHD). SMP domains follow at residues 58–115 (VTIG…TNEQ) and 123–181 (VNIA…LNQQ). Residues 145–182 (EDAEAVVGAELRSSSEMKTTPGGVADSMSAGARLNQQL) are disordered.

This sequence belongs to the LEA type SMP family.

It is found in the cytoplasm. It localises to the nucleus. In terms of biological role, LEA proteins are late embryonic proteins abundant in higher plant seed embryos. The function of those proteins is not known. The sequence is that of Late embryogenesis abundant protein 3 from Arabidopsis thaliana (Mouse-ear cress).